A 367-amino-acid polypeptide reads, in one-letter code: MEVRVQNIRKEFGRFPALEDVSLDIRSGELIALLGPSGSGKTTLLRLVAGLESPTEGTIFFGDEDASKKTVQQRNIGFVFQHYALFRHMTVLDNVAFGLKVRPAKRRPSAADIRRRAVDLLELVQLSGLERRYPAQLSGGQRQRVALARAMAVEPNVLLLDEPFGALDAQVRKELRRWLREIHDRTGHTTIFVTHDQEEALELADRVVVMSKGAIEQVGTPDEIYDHPVSPFVYGFIGQSNCLDVTLANGEIWHEDRPIGLRAGNEPDGAATLYFRPHDVELIDGCGGCLAGLVTASRRVAGTRHLELDLGRKHPPVEIELPPERAASTDHTRIAFRPTRWKLFRKGGQKEAPLIEAEAPVLAATGT.

The ABC transporter domain occupies 3 to 237 (VRVQNIRKEF…PVSPFVYGFI (235 aa)). Residue 35 to 42 (GPSGSGKT) coordinates ATP.

The protein belongs to the ABC transporter superfamily. Sulfate/tungstate importer (TC 3.A.1.6) family. In terms of assembly, the complex is composed of two ATP-binding proteins (CysA), two transmembrane proteins (CysT and CysW) and a solute-binding protein (CysP).

The protein localises to the cell inner membrane. It catalyses the reaction sulfate(out) + ATP + H2O = sulfate(in) + ADP + phosphate + H(+). It carries out the reaction thiosulfate(out) + ATP + H2O = thiosulfate(in) + ADP + phosphate + H(+). Functionally, part of the ABC transporter complex CysAWTP involved in sulfate/thiosulfate import. Responsible for energy coupling to the transport system. The protein is Sulfate/thiosulfate import ATP-binding protein CysA 2 of Rhizobium meliloti (strain 1021) (Ensifer meliloti).